The chain runs to 355 residues: dTDP-D-glucose 4,6-dehydratase (355 aa).

T142 serves as a coordination point for substrate. D143 acts as the Proton donor in catalysis. Residues E144 and Y166 each act as proton acceptor in the active site.

This sequence belongs to the NAD(P)-dependent epimerase/dehydratase family. dTDP-glucose dehydratase subfamily. Requires NAD(+) as cofactor.

It catalyses the reaction dTDP-alpha-D-glucose = dTDP-4-dehydro-6-deoxy-alpha-D-glucose + H2O. This chain is dTDP-D-glucose 4,6-dehydratase (TGDS), found in Bos taurus (Bovine).